Here is a 61-residue protein sequence, read N- to C-terminus: Conotoxin Bt5.1 (61 aa).

A signal peptide spans M1–A22. The propeptide occupies R23 to N48.

It belongs to the conotoxin T superfamily. In terms of processing, contains 2 disulfide bonds that can be either 'C1-C3, C2-C4' or 'C1-C4, C2-C3', since these disulfide connectivities have been observed for conotoxins with cysteine framework V (for examples, see AC P0DQQ7 and AC P81755). In terms of tissue distribution, expressed by the venom duct.

The protein localises to the secreted. This chain is Conotoxin Bt5.1, found in Conus betulinus (Beech cone).